Here is a 249-residue protein sequence, read N- to C-terminus: DNA polymerase sliding clamp (249 aa).

The protein belongs to the PCNA family. Homotrimer which circularizes head-to-tail (head is a N-terminus, tail is at C-terminus) to form a toroid. RFC opens the toroid so it can load on DNA. Interacts with both Pol I (pol) and Pol II (polB-polC), with Hel308 (hjm) and with Hjc. Interaction with the C-terminal PIP-box of RfcL may stabilize the toroidal structure.

In terms of biological role, sliding clamp subunit that acts as a moving platform for DNA processing. Responsible for tethering the catalytic subunit of DNA polymerase to DNA during high-speed replication. Unlike its eukaryotic paralog, loads on circular DNA without the replication factor C (RFC) clamp loader, although RFC greatly increases loading efficiency. Stimulates the ATPase activity of replication factor C (RFC) in the presence of ssDNA. Stimulates the helicase activity of Hel308 and may alter its substrate specificity. The protein is DNA polymerase sliding clamp of Pyrococcus furiosus (strain ATCC 43587 / DSM 3638 / JCM 8422 / Vc1).